Consider the following 361-residue polypeptide: Lipoyl synthase 1, chloroplastic (361 aa).

Residues C87, C92, C98, C124, C128, C131, and S339 each contribute to the [4Fe-4S] cluster site. The region spanning 107–328 (GEGDGIATAT…KEYGESVGFR (222 aa)) is the Radical SAM core domain.

It belongs to the radical SAM superfamily. Lipoyl synthase family. [4Fe-4S] cluster serves as cofactor.

Its subcellular location is the plastid. It localises to the chloroplast. It carries out the reaction [[Fe-S] cluster scaffold protein carrying a second [4Fe-4S](2+) cluster] + N(6)-octanoyl-L-lysyl-[protein] + 2 oxidized [2Fe-2S]-[ferredoxin] + 2 S-adenosyl-L-methionine + 4 H(+) = [[Fe-S] cluster scaffold protein] + N(6)-[(R)-dihydrolipoyl]-L-lysyl-[protein] + 4 Fe(3+) + 2 hydrogen sulfide + 2 5'-deoxyadenosine + 2 L-methionine + 2 reduced [2Fe-2S]-[ferredoxin]. Its pathway is protein modification; protein lipoylation via endogenous pathway; protein N(6)-(lipoyl)lysine from octanoyl-[acyl-carrier-protein]: step 2/2. In terms of biological role, catalyzes the radical-mediated insertion of two sulfur atoms into the C-6 and C-8 positions of the octanoyl moiety bound to the lipoyl domains of lipoate-dependent enzymes, thereby converting the octanoylated domains into lipoylated derivatives. The sequence is that of Lipoyl synthase 1, chloroplastic from Zea mays (Maize).